The following is a 159-amino-acid chain: uncharacterized protein (159 aa).

3 consecutive transmembrane segments (helical) span residues 17–37, 44–64, and 67–87; these read FFFF…NLSS, WLIV…PLPI, and FSGA…DLIA.

The protein resides in the membrane. This is an uncharacterized protein from Saccharomyces cerevisiae (strain ATCC 204508 / S288c) (Baker's yeast).